The chain runs to 78 residues: Small ribosomal subunit protein uS17 (78 aa).

This sequence belongs to the universal ribosomal protein uS17 family. As to quaternary structure, part of the 30S ribosomal subunit.

Its function is as follows. One of the primary rRNA binding proteins, it binds specifically to the 5'-end of 16S ribosomal RNA. In Rhizobium meliloti (strain 1021) (Ensifer meliloti), this protein is Small ribosomal subunit protein uS17.